The chain runs to 570 residues: Sulfite reductase [NADPH] hemoprotein beta-component (570 aa).

[4Fe-4S] cluster is bound by residues Cys-434, Cys-440, Cys-479, and Cys-483. Position 483 (Cys-483) interacts with siroheme.

It belongs to the nitrite and sulfite reductase 4Fe-4S domain family. In terms of assembly, alpha(8)-beta(8). The alpha component is a flavoprotein, the beta component is a hemoprotein. The cofactor is siroheme. [4Fe-4S] cluster serves as cofactor.

It catalyses the reaction hydrogen sulfide + 3 NADP(+) + 3 H2O = sulfite + 3 NADPH + 4 H(+). Its pathway is sulfur metabolism; hydrogen sulfide biosynthesis; hydrogen sulfide from sulfite (NADPH route): step 1/1. In terms of biological role, component of the sulfite reductase complex that catalyzes the 6-electron reduction of sulfite to sulfide. This is one of several activities required for the biosynthesis of L-cysteine from sulfate. The polypeptide is Sulfite reductase [NADPH] hemoprotein beta-component (Klebsiella pneumoniae subsp. pneumoniae (strain ATCC 700721 / MGH 78578)).